A 241-amino-acid polypeptide reads, in one-letter code: Uridylate kinase (241 aa).

An ATP-binding site is contributed by 15-18 (KLSG). The tract at residues 23 to 28 (GSEGFG) is involved in allosteric activation by GTP. UMP is bound at residue glycine 57. Residues glycine 58 and arginine 62 each coordinate ATP. Residues aspartate 77 and 138–145 (TGNPFFTT) each bind UMP. ATP contacts are provided by threonine 165, phenylalanine 171, and aspartate 174.

It belongs to the UMP kinase family. As to quaternary structure, homohexamer.

The protein resides in the cytoplasm. The enzyme catalyses UMP + ATP = UDP + ADP. It functions in the pathway pyrimidine metabolism; CTP biosynthesis via de novo pathway; UDP from UMP (UMPK route): step 1/1. Allosterically activated by GTP. Inhibited by UTP. Functionally, catalyzes the reversible phosphorylation of UMP to UDP. This Klebsiella pneumoniae subsp. pneumoniae (strain ATCC 700721 / MGH 78578) protein is Uridylate kinase.